The primary structure comprises 110 residues: Large ribosomal subunit protein uL24 (110 aa).

The protein belongs to the universal ribosomal protein uL24 family. As to quaternary structure, part of the 50S ribosomal subunit.

Its function is as follows. One of two assembly initiator proteins, it binds directly to the 5'-end of the 23S rRNA, where it nucleates assembly of the 50S subunit. One of the proteins that surrounds the polypeptide exit tunnel on the outside of the subunit. In Desulfovibrio desulfuricans (strain ATCC 27774 / DSM 6949 / MB), this protein is Large ribosomal subunit protein uL24.